The sequence spans 1357 residues: DNA-directed RNA polymerase subunit beta (1357 aa).

The protein belongs to the RNA polymerase beta chain family. The RNAP catalytic core consists of 2 alpha, 1 beta, 1 beta' and 1 omega subunit. When a sigma factor is associated with the core the holoenzyme is formed, which can initiate transcription.

It catalyses the reaction RNA(n) + a ribonucleoside 5'-triphosphate = RNA(n+1) + diphosphate. Functionally, DNA-dependent RNA polymerase catalyzes the transcription of DNA into RNA using the four ribonucleoside triphosphates as substrates. In Pseudomonas aeruginosa (strain UCBPP-PA14), this protein is DNA-directed RNA polymerase subunit beta.